Here is a 198-residue protein sequence, read N- to C-terminus: Probable chemoreceptor glutamine deamidase CheD (198 aa).

Belongs to the CheD family.

It catalyses the reaction L-glutaminyl-[protein] + H2O = L-glutamyl-[protein] + NH4(+). Functionally, probably deamidates glutamine residues to glutamate on methyl-accepting chemotaxis receptors (MCPs), playing an important role in chemotaxis. In Xanthomonas axonopodis pv. citri (strain 306), this protein is Probable chemoreceptor glutamine deamidase CheD.